The sequence spans 889 residues: Cytoplasmic aconitate hydratase (889 aa).

Substrate-binding positions include Gln-86 and 205–207 (DSH). Residues Cys-437, Cys-503, and Cys-506 each contribute to the [4Fe-4S] cluster site. 2 residues coordinate substrate: Arg-536 and Arg-541. Residue Thr-628 is modified to Phosphothreonine. Residues Arg-699 and 779–780 (SR) each bind substrate.

The protein belongs to the aconitase/IPM isomerase family. As to quaternary structure, interacts (when associated with the 4Fe-4S) with FBXL5. Interacts with frataxin(81-210). It depends on [4Fe-4S] cluster as a cofactor.

The protein localises to the cytoplasm. Its subcellular location is the cytosol. The enzyme catalyses citrate = D-threo-isocitrate. In terms of biological role, bifunctional iron sensor that switches between 2 activities depending on iron availability. Iron deprivation, promotes its mRNA binding activity through which it regulates the expression of genes involved in iron uptake, sequestration and utilization. Binds to iron-responsive elements (IRES) in the untranslated region of target mRNAs preventing for instance the translation of ferritin and aminolevulinic acid synthase and stabilizing the transferrin receptor mRNA. Its function is as follows. Conversely, when cellular iron levels are high, binds a 4Fe-4S cluster which precludes RNA binding activity and promotes the aconitase activity, the isomerization of citrate to isocitrate via cis-aconitate. This is Cytoplasmic aconitate hydratase (ACO1) from Homo sapiens (Human).